The following is a 424-amino-acid chain: Glutamate-1-semialdehyde 2,1-aminomutase (424 aa).

Residue K265 is modified to N6-(pyridoxal phosphate)lysine.

This sequence belongs to the class-III pyridoxal-phosphate-dependent aminotransferase family. HemL subfamily. Homodimer. It depends on pyridoxal 5'-phosphate as a cofactor.

It localises to the cytoplasm. It carries out the reaction (S)-4-amino-5-oxopentanoate = 5-aminolevulinate. The protein operates within porphyrin-containing compound metabolism; protoporphyrin-IX biosynthesis; 5-aminolevulinate from L-glutamyl-tRNA(Glu): step 2/2. In Alkaliphilus oremlandii (strain OhILAs) (Clostridium oremlandii (strain OhILAs)), this protein is Glutamate-1-semialdehyde 2,1-aminomutase.